A 184-amino-acid polypeptide reads, in one-letter code: ATP-dependent protease subunit HslV (184 aa).

The active site involves Thr-8. Na(+)-binding residues include Gly-165, Asp-168, and Thr-171.

Belongs to the peptidase T1B family. HslV subfamily. As to quaternary structure, a double ring-shaped homohexamer of HslV is capped on each side by a ring-shaped HslU homohexamer. The assembly of the HslU/HslV complex is dependent on binding of ATP.

The protein localises to the cytoplasm. The enzyme catalyses ATP-dependent cleavage of peptide bonds with broad specificity.. Its activity is regulated as follows. Allosterically activated by HslU binding. Protease subunit of a proteasome-like degradation complex believed to be a general protein degrading machinery. The chain is ATP-dependent protease subunit HslV from Pediococcus pentosaceus (strain ATCC 25745 / CCUG 21536 / LMG 10740 / 183-1w).